A 69-amino-acid polypeptide reads, in one-letter code: Alpha-conotoxin SrIA/SrIB (69 aa).

The N-terminal stretch at 1–21 is a signal peptide; it reads MGMRMMFTVFLLVVLATTVVS. Positions 22-48 are excised as a propeptide; that stretch reads FTSDSAFDSRNVAANDKVSDMIALTAR. 2 cysteine pairs are disulfide-bonded: Cys51-Cys57 and Cys52-Cys65. The tract at residues 53–55 is ser-Xaa-Pro motif, crucial for potent interaction with nAChR; the sequence is SRP. At Pro55 the chain carries 4-hydroxyproline; in form Sr1A and Sr1B. 4-carboxyglutamate; in form Sr1A is present on Glu60. The residue at position 63 (Glu63) is a 4-carboxyglutamate; in form Sr1A and Sr1B. At Gly66 the chain carries Glycine amide; in form Sr1A and Sr1B.

Belongs to the conotoxin A superfamily. In terms of processing, occurs in 2 forms which differ in the post-translational modification of Glu-60. In form SrA1 Glu-60 is 4-carboxyglutamate while in form SrA2 Glu-60 is unmodified. In terms of tissue distribution, expressed by the venom duct.

The protein localises to the secreted. Its function is as follows. Alpha-conotoxins act on postsynaptic membranes, they bind to the nicotinic acetylcholine receptors (nAChR) and thus inhibit them. Has weak blocking effects on muscle nAChR composed of alpha-1/beta-1/gamma/delta subunits and the central nervous system nAChR composed of alpha-4/beta-2 subunits. Does not detectably affect the peripheral nervous system nAChR composed of alpha-3/beta-4 subunits. Low toxin concentrations potentiate currents in muscle nAChR composed of alpha-1/beta-1/gamma/delta subunits and central nervous system nAChR composed of alpha-4/beta-2 subunits, but not the peripheral nervous system nAChR composed of alpha-3/beta-4 subunits. This chain is Alpha-conotoxin SrIA/SrIB, found in Conus spurius (Alphabet cone).